The sequence spans 336 residues: Fructose-1,6-bisphosphatase class 1 (336 aa).

Mg(2+)-binding residues include E90, D112, L114, and D115. Substrate contacts are provided by residues 115 to 118 (DGSS), N211, and K277. E283 provides a ligand contact to Mg(2+).

It belongs to the FBPase class 1 family. In terms of assembly, homotetramer. Requires Mg(2+) as cofactor.

The protein resides in the cytoplasm. The enzyme catalyses beta-D-fructose 1,6-bisphosphate + H2O = beta-D-fructose 6-phosphate + phosphate. It functions in the pathway carbohydrate biosynthesis; gluconeogenesis. The protein is Fructose-1,6-bisphosphatase class 1 of Pseudomonas fluorescens (strain ATCC BAA-477 / NRRL B-23932 / Pf-5).